The following is a 266-amino-acid chain: 4-hydroxy-tetrahydrodipicolinate reductase (266 aa).

Glycine 10–methionine 15 is a binding site for NAD(+). Position 38 (lysine 38) interacts with NADP(+). NAD(+)-binding positions include glycine 99–threonine 101 and alanine 125–phenylalanine 128. The active-site Proton donor/acceptor is histidine 155. Residue histidine 156 coordinates (S)-2,3,4,5-tetrahydrodipicolinate. Catalysis depends on lysine 159, which acts as the Proton donor. Glycine 165 to threonine 166 lines the (S)-2,3,4,5-tetrahydrodipicolinate pocket.

Belongs to the DapB family.

The protein localises to the cytoplasm. The enzyme catalyses (S)-2,3,4,5-tetrahydrodipicolinate + NAD(+) + H2O = (2S,4S)-4-hydroxy-2,3,4,5-tetrahydrodipicolinate + NADH + H(+). It catalyses the reaction (S)-2,3,4,5-tetrahydrodipicolinate + NADP(+) + H2O = (2S,4S)-4-hydroxy-2,3,4,5-tetrahydrodipicolinate + NADPH + H(+). It functions in the pathway amino-acid biosynthesis; L-lysine biosynthesis via DAP pathway; (S)-tetrahydrodipicolinate from L-aspartate: step 4/4. In terms of biological role, catalyzes the conversion of 4-hydroxy-tetrahydrodipicolinate (HTPA) to tetrahydrodipicolinate. This chain is 4-hydroxy-tetrahydrodipicolinate reductase, found in Bacillus mycoides (strain KBAB4) (Bacillus weihenstephanensis).